A 268-amino-acid polypeptide reads, in one-letter code: Tryptophan synthase alpha chain (268 aa).

Residues glutamate 49 and aspartate 60 each act as proton acceptor in the active site.

It belongs to the TrpA family. In terms of assembly, tetramer of two alpha and two beta chains.

The catalysed reaction is (1S,2R)-1-C-(indol-3-yl)glycerol 3-phosphate + L-serine = D-glyceraldehyde 3-phosphate + L-tryptophan + H2O. The protein operates within amino-acid biosynthesis; L-tryptophan biosynthesis; L-tryptophan from chorismate: step 5/5. Its function is as follows. The alpha subunit is responsible for the aldol cleavage of indoleglycerol phosphate to indole and glyceraldehyde 3-phosphate. The chain is Tryptophan synthase alpha chain from Shigella boydii serotype 4 (strain Sb227).